A 465-amino-acid polypeptide reads, in one-letter code: tRNA (guanine(37)-N(1))-methyltransferase (465 aa).

The N-terminal 20 residues, 1-20, are a transit peptide targeting the mitochondrion; that stretch reads MDKNSQLRDMNLFRAPAARA. Residues His-238 and 304-305 contribute to the S-adenosyl-L-methionine site; that span reads DG. Residues 326–345 form a disordered region; the sequence is AVIKPPRPPRKSAAPPPEPV. Asn-359 contributes to the S-adenosyl-L-methionine binding site.

This sequence belongs to the class I-like SAM-binding methyltransferase superfamily. TRM5/TYW2 family. In terms of assembly, monomer.

It is found in the mitochondrion matrix. The protein localises to the nucleus. The protein resides in the cytoplasm. The catalysed reaction is guanosine(37) in tRNA + S-adenosyl-L-methionine = N(1)-methylguanosine(37) in tRNA + S-adenosyl-L-homocysteine + H(+). In terms of biological role, specifically methylates the N1 position of guanosine-37 in various cytoplasmic and mitochondrial tRNAs. Methylation is not dependent on the nature of the nucleoside 5' of the target nucleoside. This is the first step in the biosynthesis of wybutosine (yW), a modified base adjacent to the anticodon of tRNAs and required for accurate decoding. The chain is tRNA (guanine(37)-N(1))-methyltransferase from Fusarium vanettenii (strain ATCC MYA-4622 / CBS 123669 / FGSC 9596 / NRRL 45880 / 77-13-4) (Fusarium solani subsp. pisi).